The sequence spans 271 residues: Ribosomal RNA small subunit methyltransferase A (271 aa).

5 residues coordinate S-adenosyl-L-methionine: leucine 20, glycine 45, glutamate 66, aspartate 90, and asparagine 112.

It belongs to the class I-like SAM-binding methyltransferase superfamily. rRNA adenine N(6)-methyltransferase family. RsmA subfamily.

The protein localises to the cytoplasm. It carries out the reaction adenosine(1518)/adenosine(1519) in 16S rRNA + 4 S-adenosyl-L-methionine = N(6)-dimethyladenosine(1518)/N(6)-dimethyladenosine(1519) in 16S rRNA + 4 S-adenosyl-L-homocysteine + 4 H(+). In terms of biological role, specifically dimethylates two adjacent adenosines (A1518 and A1519) in the loop of a conserved hairpin near the 3'-end of 16S rRNA in the 30S particle. May play a critical role in biogenesis of 30S subunits. The polypeptide is Ribosomal RNA small subunit methyltransferase A (Blochmanniella floridana).